Consider the following 379-residue polypeptide: Homoserine O-succinyltransferase (379 aa).

In terms of domain architecture, AB hydrolase-1 spans 51-360 (NAVLICHALS…DAPQGHDAFL (310 aa)). S157 (nucleophile) is an active-site residue. Substrate is bound at residue R227. Catalysis depends on residues D323 and H356. D357 is a binding site for substrate.

The protein belongs to the AB hydrolase superfamily. MetX family. Homodimer.

It is found in the cytoplasm. It catalyses the reaction L-homoserine + succinyl-CoA = O-succinyl-L-homoserine + CoA. The protein operates within amino-acid biosynthesis; L-methionine biosynthesis via de novo pathway; O-succinyl-L-homoserine from L-homoserine: step 1/1. Requires MetW for activity. Transfers a succinyl group from succinyl-CoA to L-homoserine, forming succinyl-L-homoserine. In Pseudomonas syringae pv. syringae (strain B728a), this protein is Homoserine O-succinyltransferase.